A 332-amino-acid polypeptide reads, in one-letter code: Cysteine and histidine-rich domain-containing protein 1 (332 aa).

Ala2 is subject to N-acetylalanine. The tract at residues 2 to 77 (ALLCYNRGCG…KPPEPVKPEV (76 aa)) is interaction with PPP5C. 6 residues coordinate Zn(2+): Cys5, Cys10, Cys24, His27, Cys42, and Cys43. CHORD domains are found at residues 5–64 (CYNR…KGRH) and 157–216 (CKNG…TGKH). Position 47 is a phosphothreonine (Thr47). The residue at position 51 (Ser51) is a Phosphoserine. The Zn(2+) site is built by Cys59, His64, Cys157, Cys162, Cys176, His179, Cys194, Cys195, Cys211, and His216. Residues 62 to 82 (GRHNSEKPPEPVKPEVKTTEK) are disordered. The segment covering 64 to 82 (HNSEKPPEPVKPEVKTTEK) has biased composition (basic and acidic residues). The interaction with HSP90AA1 and HSP90AB1 stretch occupies residues 65-316 (NSEKPPEPVK…AEPMQWASLE (252 aa)). In terms of domain architecture, CS spans 227–316 (VVPCRHDWHQ…AEPMQWASLE (90 aa)).

In terms of assembly, interacts with HSP90AA1, HSP90AB1, PPP5C, ROCK1 and ROCK2.

Functionally, regulates centrosome duplication, probably by inhibiting the kinase activity of ROCK2. Proposed to act as co-chaperone for HSP90. May play a role in the regulation of NOD1 via a HSP90 chaperone complex. In vitro, has intrinsic chaperone activity. This function may be achieved by inhibiting association of ROCK2 with NPM1. Plays a role in ensuring the localization of the tyrosine kinase receptor EGFR to the plasma membrane, and thus ensures the subsequent regulation of EGFR activity and EGF-induced actin cytoskeleton remodeling. Involved in stress response. Prevents tumorigenesis. This Bos taurus (Bovine) protein is Cysteine and histidine-rich domain-containing protein 1 (CHORDC1).